The following is a 222-amino-acid chain: Coiled-coil domain-containing protein 70 (222 aa).

Coiled-coil stretches lie at residues 34 to 62 and 129 to 188; these read LQEEKAFREEMRHFREKIEDFREEMWNFR and NALW…KAAW.

This chain is Coiled-coil domain-containing protein 70 (CCDC70), found in Bos taurus (Bovine).